We begin with the raw amino-acid sequence, 1202 residues long: Caffeine-induced protein 16 (1202 aa).

A PAP-associated domain is found at 1105-1159 (NIALLLRGFFCYYGLTTQYSFDWEAYMIDISSSQLKRKSTEFKDCPFVVLDPFLK).

This Schizosaccharomyces pombe (strain 972 / ATCC 24843) (Fission yeast) protein is Caffeine-induced protein 16 (cid16).